The chain runs to 390 residues: Heme chaperone HemW (390 aa).

The Radical SAM core domain occupies 15–254 (PMPGQPFGVY…DARLSAAGFA (240 aa)). Tyrosine 24 lines the S-adenosyl-L-methionine pocket. [4Fe-4S] cluster-binding residues include cysteine 30, cysteine 34, and cysteine 37. Residues glycine 82, 83–84 (GT), glutamate 115, glutamine 142, arginine 154, and aspartate 179 contribute to the S-adenosyl-L-methionine site.

The protein belongs to the anaerobic coproporphyrinogen-III oxidase family. HemW subfamily. [4Fe-4S] cluster serves as cofactor.

It localises to the cytoplasm. Functionally, probably acts as a heme chaperone, transferring heme to an unknown acceptor. Binds one molecule of heme per monomer, possibly covalently. Binds 1 [4Fe-4S] cluster. The cluster is coordinated with 3 cysteines and an exchangeable S-adenosyl-L-methionine. In Mycobacterium tuberculosis (strain CDC 1551 / Oshkosh), this protein is Heme chaperone HemW.